The sequence spans 178 residues: uncharacterized protein (178 aa).

The N-terminal stretch at 1–20 (MKKLLVASLALLILTPVALA) is a signal peptide.

This is an uncharacterized protein from Archaeoglobus fulgidus (strain ATCC 49558 / DSM 4304 / JCM 9628 / NBRC 100126 / VC-16).